The following is a 492-amino-acid chain: Ketol-acid reductoisomerase (NADP(+)) (492 aa).

Residues 14–208 (LDQLGRCRFM…GGHKAGVLES (195 aa)) enclose the KARI N-terminal Rossmann domain. NADP(+) is bound by residues 45-48 (CGAQ), R68, R76, S78, and 108-110 (DKQ). The active site involves H132. An NADP(+)-binding site is contributed by G158. KARI C-terminal knotted domains lie at 209–344 (SFVA…NAPK) and 345–485 (YDGK…MTDM). The Mg(2+) site is built by D217, E221, E389, and E393. Residue S414 coordinates substrate.

This sequence belongs to the ketol-acid reductoisomerase family. Requires Mg(2+) as cofactor.

It catalyses the reaction (2R)-2,3-dihydroxy-3-methylbutanoate + NADP(+) = (2S)-2-acetolactate + NADPH + H(+). The enzyme catalyses (2R,3R)-2,3-dihydroxy-3-methylpentanoate + NADP(+) = (S)-2-ethyl-2-hydroxy-3-oxobutanoate + NADPH + H(+). The protein operates within amino-acid biosynthesis; L-isoleucine biosynthesis; L-isoleucine from 2-oxobutanoate: step 2/4. It functions in the pathway amino-acid biosynthesis; L-valine biosynthesis; L-valine from pyruvate: step 2/4. In terms of biological role, involved in the biosynthesis of branched-chain amino acids (BCAA). Catalyzes an alkyl-migration followed by a ketol-acid reduction of (S)-2-acetolactate (S2AL) to yield (R)-2,3-dihydroxy-isovalerate. In the isomerase reaction, S2AL is rearranged via a Mg-dependent methyl migration to produce 3-hydroxy-3-methyl-2-ketobutyrate (HMKB). In the reductase reaction, this 2-ketoacid undergoes a metal-dependent reduction by NADPH to yield (R)-2,3-dihydroxy-isovalerate. The polypeptide is Ketol-acid reductoisomerase (NADP(+)) (Haemophilus influenzae (strain PittEE)).